The chain runs to 88 residues: PTS system cellobiose-specific EIIB component (88 aa).

Residues 3 to 88 (KKRIYLFCSA…IDTLLYGKVD (86 aa)) enclose the PTS EIIB type-3 domain. Residue cysteine 10 is the Phosphocysteine intermediate of the active site. Cysteine 10 is subject to Phosphocysteine; by EIIA.

It is found in the cytoplasm. The catalysed reaction is D-cellobiose(out) + N(pros)-phospho-L-histidyl-[protein] = 6-phospho-beta-D-glucosyl-(1-&gt;4)-D-glucose(in) + L-histidyl-[protein]. Functionally, the phosphoenolpyruvate-dependent sugar phosphotransferase system (sugar PTS), a major carbohydrate active transport system, catalyzes the phosphorylation of incoming sugar substrates concomitantly with their translocation across the cell membrane. The enzyme II CelABD PTS system is involved in cellobiose transport. The chain is PTS system cellobiose-specific EIIB component from Aeromonas hydrophila.